Reading from the N-terminus, the 525-residue chain is Protein shisa-6 (525 aa).

The signal sequence occupies residues 1–30 (MALRRLLLPPLLLSLLLSLASLHLPPGADA). At 31-180 (ARGRSGNRTL…NKYDPEKDKT (150 aa)) the chain is on the extracellular side. 2 N-linked (GlcNAc...) asparagine glycosylation sites follow: Asn37 and Asn62. Residues 181–201 (NFTVYITCGVIAFVIVAGVFA) form a helical membrane-spanning segment. The Cytoplasmic portion of the chain corresponds to 202-525 (KVSYDKAHRP…YTASKTEVTV (324 aa)). The tract at residues 241–294 (ISAIDTSPKENTPVRSTSKNHYTPVRTAKQTPGDRQYNHPILSSATQTPTHEKP) is disordered. Residues 243–261 (AIDTSPKENTPVRSTSKNH) are compositionally biased toward polar residues. A phosphoserine mark is found at Ser416, Ser422, and Ser434. Thr458 is subject to Phosphothreonine. The interval 469 to 495 (MHSHPSASNNSYATLGQSQTAAKRHAF) is disordered. The span at 473–489 (PSASNNSYATLGQSQTA) shows a compositional bias: polar residues. Thr502 carries the phosphothreonine modification. The PDZ-binding signature appears at 522–525 (EVTV).

This sequence belongs to the shisa family. Component of the postsynaptic hippocampal AMPA-type glutamate receptor (AMPAR) complex, at least composed of pore forming AMPAR subunits GRIA1, GRIA2 and GRIA3 and AMPAR auxiliary proteins SHISA6 and SHISA7. Interacts (via PDZ-binding motif) with DLG4/PSD-95 (via PDZ domain); the interaction is direct. In terms of processing, N-glycosylated. Highly expressed in cerebellum and hippocampal neurons: CA1 stratum oriens and stratum radiatum, CA3 stratum oriens and stratum lucidum, and the dentate gyrus polymorphic layer. Expressed in other brain structures including olfactory bulb, cortex, amygdala and midbrain (at protein level). Also expressed in a subset of spermatogonial stem cells. Also expressed in eye, heart, kidney, lung, muscle and spleen. Isoform 2: Specifically expressed in hippocampus.

The protein localises to the postsynaptic density membrane. Its function is as follows. Involved in maintenance of high-frequency synaptic transmission at hippocampal CA3-CA1 synapses. Regulates AMPA-type glutamate receptor (AMPAR) immobilization at postsynaptic density keeping the channels in an activated state in the presence of glutamate and preventing synaptic depression. May play a role in self-renewal and differentiation of spermatogonial stem cells by inhibiting canonical Wnt signaling pathway. The chain is Protein shisa-6 from Mus musculus (Mouse).